Consider the following 117-residue polypeptide: Pterin-4-alpha-carbinolamine dehydratase 2 (117 aa).

An N6-acetyllysine; alternate mark is found at Lys101, Lys105, and Lys112. Lys101, Lys105, and Lys112 each carry N6-succinyllysine; alternate.

It belongs to the pterin-4-alpha-carbinolamine dehydratase family. As to quaternary structure, homotetramer. Interacts with DYRK1B.

It catalyses the reaction (4aS,6R)-4a-hydroxy-L-erythro-5,6,7,8-tetrahydrobiopterin = (6R)-L-erythro-6,7-dihydrobiopterin + H2O. Functionally, involved in tetrahydrobiopterin biosynthesis. Seems to both prevent the formation of 7-pterins and accelerate the formation of quinonoid-BH2. Regulates the dimerization of homeodomain protein HNF-1-alpha and enhances its transcriptional activity. This is Pterin-4-alpha-carbinolamine dehydratase 2 (PCBD2) from Pongo abelii (Sumatran orangutan).